The following is a 507-amino-acid chain: ATP synthase subunit beta (507 aa).

Positions 1 to 22 (MSGLASKAKSRVKSSKGKNSTN) are disordered. 183–190 (GGAGVGKT) contacts ATP.

This sequence belongs to the ATPase alpha/beta chains family. F-type ATPases have 2 components, CF(1) - the catalytic core - and CF(0) - the membrane proton channel. CF(1) has five subunits: alpha(3), beta(3), gamma(1), delta(1), epsilon(1). CF(0) has three main subunits: a(1), b(2) and c(9-12). The alpha and beta chains form an alternating ring which encloses part of the gamma chain. CF(1) is attached to CF(0) by a central stalk formed by the gamma and epsilon chains, while a peripheral stalk is formed by the delta and b chains.

Its subcellular location is the cell inner membrane. It carries out the reaction ATP + H2O + 4 H(+)(in) = ADP + phosphate + 5 H(+)(out). In terms of biological role, produces ATP from ADP in the presence of a proton gradient across the membrane. The catalytic sites are hosted primarily by the beta subunits. This is ATP synthase subunit beta from Ehrlichia chaffeensis (strain ATCC CRL-10679 / Arkansas).